The sequence spans 283 residues: 2-dehydro-3-deoxyphosphooctonate aldolase (283 aa).

This sequence belongs to the KdsA family.

The protein localises to the cytoplasm. The enzyme catalyses D-arabinose 5-phosphate + phosphoenolpyruvate + H2O = 3-deoxy-alpha-D-manno-2-octulosonate-8-phosphate + phosphate. Its pathway is carbohydrate biosynthesis; 3-deoxy-D-manno-octulosonate biosynthesis; 3-deoxy-D-manno-octulosonate from D-ribulose 5-phosphate: step 2/3. The protein operates within bacterial outer membrane biogenesis; lipopolysaccharide biosynthesis. This Laribacter hongkongensis (strain HLHK9) protein is 2-dehydro-3-deoxyphosphooctonate aldolase.